The following is a 467-amino-acid chain: Tyrosine phenol-lyase (467 aa).

Position 268 is an N6-(pyridoxal phosphate)lysine (Lys268).

This sequence belongs to the beta-eliminating lyase family. As to quaternary structure, homotetramer. Pyridoxal 5'-phosphate serves as cofactor.

The catalysed reaction is L-tyrosine + H2O = phenol + pyruvate + NH4(+). The protein is Tyrosine phenol-lyase of Nostoc punctiforme (strain ATCC 29133 / PCC 73102).